The primary structure comprises 105 residues: MLLNKITFFERFEHDILSGAKTITLRDEAESHVITGQILPVSTFETDRWFCDIQIIDVTPVKLTELTEMHAKQENMTLPQLRDVIAEIYPGLEQLFMIRFRILLQ.

The 87-residue stretch at 7–93 folds into the ASCH domain; it reads TFFERFEHDI…VIAEIYPGLE (87 aa). The Proton acceptor role is filled by K21. T24 acts as the Nucleophile in catalysis. E74 (proton donor) is an active-site residue.

Belongs to the N(4)-acetylcytidine amidohydrolase family.

The enzyme catalyses N(4)-acetylcytidine + H2O = cytidine + acetate + H(+). It catalyses the reaction N(4)-acetyl-2'-deoxycytidine + H2O = 2'-deoxycytidine + acetate + H(+). The catalysed reaction is N(4)-acetylcytosine + H2O = cytosine + acetate + H(+). In terms of biological role, catalyzes the hydrolysis of N(4)-acetylcytidine (ac4C). In Shewanella baltica (strain OS155 / ATCC BAA-1091), this protein is N(4)-acetylcytidine amidohydrolase.